We begin with the raw amino-acid sequence, 283 residues long: Elongation factor Ts (283 aa).

The interval 80-83 (TDFV) is involved in Mg(2+) ion dislocation from EF-Tu.

Belongs to the EF-Ts family.

Its subcellular location is the cytoplasm. Associates with the EF-Tu.GDP complex and induces the exchange of GDP to GTP. It remains bound to the aminoacyl-tRNA.EF-Tu.GTP complex up to the GTP hydrolysis stage on the ribosome. This Actinobacillus succinogenes (strain ATCC 55618 / DSM 22257 / CCUG 43843 / 130Z) protein is Elongation factor Ts.